Consider the following 563-residue polypeptide: MNSNTIKTGIDRAPHRSLLKALGLTDRELSKPFIGVVNSFTELVPGHMHLRQVTEAVKAGIRENGGTPFEFSTIAVCDGIAMGHEGMHYSLASREIVADAIEVMAKGHQLDALVLIPSCDKVVPGMLMAAMRLNIPAIVVSGGPMLPGRFEGNPVTLSTVFEGVGQVHAGKKDEAWLHELEAKACPTCGSCAGMFTANSMNCLTEALGMALPGNGTIPAVYSERLVLAKETGYQVMELYRQDLKPRDIVTQSTLKNGVAVDMALGCSTNTILHLPAIANEGDIDWDLGKVNEVSEKTPQICKLAPASETPLAALHEAGGVSAVLKQLLDAGLIDGSTMTVSGVTMAERLKDAKVVDTEIIRPQSNPFSQRGGLRILFGNLAPEGAVIKQGALSSQDFVFEGSAKVFNGEVPAAEAIRNLEIKAGDVVVIRYEGPKGGPGMREMLGPTATLAGMGLDSDVALLTDGRFSGASRGLSIGHVSPEAALGGDIALLKDGDKIRIDIGKGRLEWIVSEEEREQRRQEFAAMAVKPDHLKPELRQGYLGRYAYFVQSASKGAALRRVKE.

Mg(2+) is bound at residue Asp-78. Cys-119 is a binding site for [2Fe-2S] cluster. Mg(2+) is bound by residues Asp-120 and Lys-121. Lys-121 is modified (N6-carboxylysine). A [2Fe-2S] cluster-binding site is contributed by Cys-191. A Mg(2+)-binding site is contributed by Glu-442. Residue Ser-468 is the Proton acceptor of the active site.

Belongs to the IlvD/Edd family. In terms of assembly, homodimer. The cofactor is [2Fe-2S] cluster. Mg(2+) serves as cofactor.

The catalysed reaction is (2R)-2,3-dihydroxy-3-methylbutanoate = 3-methyl-2-oxobutanoate + H2O. The enzyme catalyses (2R,3R)-2,3-dihydroxy-3-methylpentanoate = (S)-3-methyl-2-oxopentanoate + H2O. The protein operates within amino-acid biosynthesis; L-isoleucine biosynthesis; L-isoleucine from 2-oxobutanoate: step 3/4. Its pathway is amino-acid biosynthesis; L-valine biosynthesis; L-valine from pyruvate: step 3/4. Functionally, functions in the biosynthesis of branched-chain amino acids. Catalyzes the dehydration of (2R,3R)-2,3-dihydroxy-3-methylpentanoate (2,3-dihydroxy-3-methylvalerate) into 2-oxo-3-methylpentanoate (2-oxo-3-methylvalerate) and of (2R)-2,3-dihydroxy-3-methylbutanoate (2,3-dihydroxyisovalerate) into 2-oxo-3-methylbutanoate (2-oxoisovalerate), the penultimate precursor to L-isoleucine and L-valine, respectively. This is Dihydroxy-acid dehydratase from Desulfitobacterium hafniense (strain DSM 10664 / DCB-2).